Reading from the N-terminus, the 196-residue chain is UMP-CMP kinase (196 aa).

An ATP-binding site is contributed by 13-18 (GAGKGT). Ser33 carries the post-translational modification Phosphoserine. Positions 33-63 (SAGELLRDERKNPDSQYGELIEKYIKEGKIV) are NMP. Arg39 provides a ligand contact to a ribonucleoside 5'-phosphate. An N6-acetyllysine mark is found at Lys43 and Lys55. 61 to 63 (KIV) serves as a coordination point for a ribonucleoside 5'-phosphate. A Glycyl lysine isopeptide (Lys-Gly) (interchain with G-Cter in SUMO2) cross-link involves residue Lys73. 93-96 (GFPR) serves as a coordination point for a ribonucleoside 5'-phosphate. Position 100 (Asn100) interacts with CMP. N6-succinyllysine is present on Lys106. The segment at 133–143 (ERGKSSGRSDD) is LID. Arg134 serves as a coordination point for ATP. 2 residues coordinate a ribonucleoside 5'-phosphate: Arg140 and Arg151. Residue Lys179 participates in ATP binding. Phosphoserine is present on Ser180.

It belongs to the adenylate kinase family. UMP-CMP kinase subfamily. As to quaternary structure, monomer. Mg(2+) serves as cofactor.

The protein resides in the nucleus. The protein localises to the cytoplasm. The catalysed reaction is CMP + ATP = CDP + ADP. It carries out the reaction dCMP + ATP = dCDP + ADP. It catalyses the reaction UMP + ATP = UDP + ADP. The enzyme catalyses a 2'-deoxyribonucleoside 5'-diphosphate + ATP = a 2'-deoxyribonucleoside 5'-triphosphate + ADP. The catalysed reaction is a ribonucleoside 5'-diphosphate + ATP = a ribonucleoside 5'-triphosphate + ADP. In terms of biological role, catalyzes the phosphorylation of pyrimidine nucleoside monophosphates at the expense of ATP. Plays an important role in de novo pyrimidine nucleotide biosynthesis. Has preference for UMP and CMP as phosphate acceptors. Also displays broad nucleoside diphosphate kinase activity. This is UMP-CMP kinase (Cmpk1) from Rattus norvegicus (Rat).